Consider the following 186-residue polypeptide: Interferon beta-2 (186 aa).

An N-terminal signal peptide occupies residues 1-21 (MTHRCLLQMVLLLCFSTTALS). Cysteines 52 and 161 form a disulfide. N131 and N173 each carry an N-linked (GlcNAc...) asparagine glycan.

The protein belongs to the alpha/beta interferon family. In terms of assembly, monomer.

It localises to the secreted. Its function is as follows. Has antiviral, antibacterial and anticancer activities. This is Interferon beta-2 (IFNB2) from Bos taurus (Bovine).